The sequence spans 21 residues: Protein IroK (21 aa).

Its function is as follows. Possible increased expression of this protein (due to mutations upstream of the start codon) is proposed to be responsible for resistance to 3-hydroxypropionic acid (3-HP). The sequence is that of Protein IroK (iroK) from Escherichia coli (strain K12).